A 1171-amino-acid chain; its full sequence is ATP-dependent helicase/deoxyribonuclease subunit B (1171 aa).

Residues methionine 1 to alanine 390 form the UvrD-like helicase ATP-binding domain. ATP is bound at residue glycine 8 to serine 15. In terms of domain architecture, UvrD-like helicase C-terminal spans methionine 281–aspartate 587. Cysteine 805, cysteine 1129, cysteine 1132, and cysteine 1138 together coordinate [4Fe-4S] cluster.

It belongs to the helicase family. AddB/RexB type 1 subfamily. As to quaternary structure, heterodimer of AddA and AddB. The cofactor is Mg(2+). It depends on [4Fe-4S] cluster as a cofactor.

In terms of biological role, the heterodimer acts as both an ATP-dependent DNA helicase and an ATP-dependent, dual-direction single-stranded exonuclease. Recognizes the chi site generating a DNA molecule suitable for the initiation of homologous recombination. The AddB subunit has 5' -&gt; 3' nuclease activity but not helicase activity. The chain is ATP-dependent helicase/deoxyribonuclease subunit B from Bacillus cereus (strain B4264).